We begin with the raw amino-acid sequence, 1399 residues long: DNA-directed RNA polymerase subunit beta' (1399 aa).

4 residues coordinate Zn(2+): C71, C73, C86, and C89. Mg(2+) contacts are provided by D462, D464, and D466. Positions 810, 884, 891, and 894 each coordinate Zn(2+).

The protein belongs to the RNA polymerase beta' chain family. The RNAP catalytic core consists of 2 alpha, 1 beta, 1 beta' and 1 omega subunit. When a sigma factor is associated with the core the holoenzyme is formed, which can initiate transcription. The cofactor is Mg(2+). Zn(2+) serves as cofactor.

The enzyme catalyses RNA(n) + a ribonucleoside 5'-triphosphate = RNA(n+1) + diphosphate. In terms of biological role, DNA-dependent RNA polymerase catalyzes the transcription of DNA into RNA using the four ribonucleoside triphosphates as substrates. This Chelativorans sp. (strain BNC1) protein is DNA-directed RNA polymerase subunit beta'.